Here is an 862-residue protein sequence, read N- to C-terminus: DNA mismatch repair protein MutS (862 aa).

608–615 (GPNMAGKS) is an ATP binding site.

It belongs to the DNA mismatch repair MutS family.

In terms of biological role, this protein is involved in the repair of mismatches in DNA. It is possible that it carries out the mismatch recognition step. This protein has a weak ATPase activity. The chain is DNA mismatch repair protein MutS from Bacteroides fragilis (strain YCH46).